The sequence spans 80 residues: Toxin Acra I-3 (80 aa).

A signal peptide spans 1–22 (MMKLVLLSVIVILFSLIGSIHG). An LCN-type CS-alpha/beta domain is found at 25-80 (VPGNYPLDSSGNKYPCTVLGDNQSCIDVCKKHGVKYGYCYGFKCWCEYLKDKNVSL). 3 disulfide bridges follow: C40–C63, C49–C68, and C53–C70.

The protein belongs to the long (3 C-C) scorpion toxin superfamily. Sodium/Potassium channel inhibitor family. Expressed by the venom gland.

The protein localises to the secreted. Functionally, probable neurotoxin that inhibits ion channels. Is toxic to mice. This Androctonus crassicauda (Arabian fat-tailed scorpion) protein is Toxin Acra I-3.